The primary structure comprises 92 residues: Small ribosomal subunit protein uS19 (92 aa).

It belongs to the universal ribosomal protein uS19 family.

Functionally, protein S19 forms a complex with S13 that binds strongly to the 16S ribosomal RNA. This chain is Small ribosomal subunit protein uS19, found in Rhodopseudomonas palustris (strain BisB5).